A 333-amino-acid polypeptide reads, in one-letter code: Ribosomal RNA small subunit methyltransferase H (333 aa).

S-adenosyl-L-methionine is bound by residues Gly-39 to Tyr-41, Asp-57, Phe-84, Asp-101, and Gln-108.

This sequence belongs to the methyltransferase superfamily. RsmH family.

Its subcellular location is the cytoplasm. The enzyme catalyses cytidine(1402) in 16S rRNA + S-adenosyl-L-methionine = N(4)-methylcytidine(1402) in 16S rRNA + S-adenosyl-L-homocysteine + H(+). Functionally, specifically methylates the N4 position of cytidine in position 1402 (C1402) of 16S rRNA. The protein is Ribosomal RNA small subunit methyltransferase H of Dinoroseobacter shibae (strain DSM 16493 / NCIMB 14021 / DFL 12).